A 315-amino-acid polypeptide reads, in one-letter code: Type II restriction enzyme AvaI (315 aa).

It carries out the reaction Endonucleolytic cleavage of DNA to give specific double-stranded fragments with terminal 5'-phosphates.. Functionally, a P subtype restriction enzyme that recognizes the double-stranded sequence 5'-CYCGRG-3' and cleaves after C-1. This is Type II restriction enzyme AvaI from Anabaena variabilis.